The following is a 200-amino-acid chain: Small ribosomal subunit protein uS4 (200 aa).

Residues Ser-92–Val-155 form the S4 RNA-binding domain.

This sequence belongs to the universal ribosomal protein uS4 family. As to quaternary structure, part of the 30S ribosomal subunit. Contacts protein S5. The interaction surface between S4 and S5 is involved in control of translational fidelity.

One of the primary rRNA binding proteins, it binds directly to 16S rRNA where it nucleates assembly of the body of the 30S subunit. Functionally, with S5 and S12 plays an important role in translational accuracy. The chain is Small ribosomal subunit protein uS4 from Staphylococcus aureus (strain JH9).